The chain runs to 100 residues: Mini zinc finger protein 2 (100 aa).

The disordered stretch occupies residues 1-26; the sequence is MRKRQVVLRRASPEEPSRSSSTASSL. Residues 33 to 83 form a ZF-HD dimerization-type; degenerate zinc finger; it reads YGECQKNHAAAVGGYAVDGCREFMASRGEEGTVAALTCAACGCHRSFHRRE.

As to quaternary structure, homo- and heterodimers. Interacts with ZHD1, ZHD3, ZHD5, ZHD8, ZHD10 and ZHD13. Mostly expressed in stems, flowers and siliques, and, to a lower extent, in inflorescence.

The protein localises to the cytoplasm. In terms of biological role, inhibits zinc finger homeodomain (ZHD) transcription factors by interacting with them to prevent both their nuclear localization and their DNA-binding properties. Involved in integrating signals from multiple hormones by regulating the expression of specific genes. The chain is Mini zinc finger protein 2 (MIF2) from Arabidopsis thaliana (Mouse-ear cress).